Consider the following 704-residue polypeptide: Elongation factor G (704 aa).

The 283-residue stretch at 8–290 folds into the tr-type G domain; the sequence is ARYRNIGISA…AVIEYLPAPT (283 aa). GTP is bound by residues 17 to 24, 88 to 92, and 142 to 145; these read AHIDAGKT, DTPGH, and NKMD.

It belongs to the TRAFAC class translation factor GTPase superfamily. Classic translation factor GTPase family. EF-G/EF-2 subfamily.

Its subcellular location is the cytoplasm. In terms of biological role, catalyzes the GTP-dependent ribosomal translocation step during translation elongation. During this step, the ribosome changes from the pre-translocational (PRE) to the post-translocational (POST) state as the newly formed A-site-bound peptidyl-tRNA and P-site-bound deacylated tRNA move to the P and E sites, respectively. Catalyzes the coordinated movement of the two tRNA molecules, the mRNA and conformational changes in the ribosome. The polypeptide is Elongation factor G (Proteus mirabilis (strain HI4320)).